The sequence spans 913 residues: DNA polymerase (913 aa).

The interval 182–401 (PLIIASWDIE…AYARKDTDLP (220 aa)) is contains conserved residues essential for 3' -&gt; 5' exonuclease activities.

Belongs to the DNA polymerase type-B family.

The catalysed reaction is DNA(n) + a 2'-deoxyribonucleoside 5'-triphosphate = DNA(n+1) + diphosphate. In addition to polymerase activity, this DNA polymerase potentially exhibits 3' to 5' exonuclease activity. The protein is DNA polymerase (DPO) of Chlorella (PBCV-NY2A).